A 315-amino-acid polypeptide reads, in one-letter code: Acetyl-coenzyme A carboxylase carboxyl transferase subunit alpha (315 aa).

The CoA carboxyltransferase C-terminal domain occupies 39-293 (RLQDKSSTLT…RGELASQLAM (255 aa)).

It belongs to the AccA family. As to quaternary structure, acetyl-CoA carboxylase is a heterohexamer composed of biotin carboxyl carrier protein (AccB), biotin carboxylase (AccC) and two subunits each of ACCase subunit alpha (AccA) and ACCase subunit beta (AccD).

It localises to the cytoplasm. The enzyme catalyses N(6)-carboxybiotinyl-L-lysyl-[protein] + acetyl-CoA = N(6)-biotinyl-L-lysyl-[protein] + malonyl-CoA. It functions in the pathway lipid metabolism; malonyl-CoA biosynthesis; malonyl-CoA from acetyl-CoA: step 1/1. In terms of biological role, component of the acetyl coenzyme A carboxylase (ACC) complex. First, biotin carboxylase catalyzes the carboxylation of biotin on its carrier protein (BCCP) and then the CO(2) group is transferred by the carboxyltransferase to acetyl-CoA to form malonyl-CoA. In Pseudomonas fluorescens (strain SBW25), this protein is Acetyl-coenzyme A carboxylase carboxyl transferase subunit alpha.